Here is a 241-residue protein sequence, read N- to C-terminus: Small ribosomal subunit protein uS3c (241 aa).

Belongs to the universal ribosomal protein uS3 family. As to quaternary structure, part of the 30S ribosomal subunit.

Its subcellular location is the plastid. The chain is Small ribosomal subunit protein uS3c (rps3) from Helicosporidium sp. subsp. Simulium jonesii (Green alga).